A 434-amino-acid polypeptide reads, in one-letter code: UDP-glucose 6-dehydrogenase (434 aa).

NAD(+) is bound by residues 2-19 (NITF…GVMM), V11, D30, K35, T121, and E152. Residues 148 to 152 (EFLRE), K204, N208, 249 to 253 (FLNAG), and G257 contribute to the substrate site. C260 serves as the catalytic Nucleophile. NAD(+) is bound at residue K263. K321 is a binding site for substrate. R328 contacts NAD(+).

The protein belongs to the UDP-glucose/GDP-mannose dehydrogenase family.

The catalysed reaction is UDP-alpha-D-glucose + 2 NAD(+) + H2O = UDP-alpha-D-glucuronate + 2 NADH + 3 H(+). It functions in the pathway nucleotide-sugar biosynthesis; UDP-alpha-D-glucuronate biosynthesis; UDP-alpha-D-glucuronate from UDP-alpha-D-glucose: step 1/1. This is UDP-glucose 6-dehydrogenase (udg) from Rickettsia bellii (strain RML369-C).